Consider the following 337-residue polypeptide: DNA-directed RNA polymerase subunit alpha (337 aa).

The alpha N-terminal domain (alpha-NTD) stretch occupies residues 1-233; sequence MVREEVVGST…DLFIPFLHAE (233 aa). The interval 265–337 is alpha C-terminal domain (alpha-CTD); the sequence is KEIALKCIFI…FAIDLPKNKF (73 aa).

The protein belongs to the RNA polymerase alpha chain family. As to quaternary structure, in plastids the minimal PEP RNA polymerase catalytic core is composed of four subunits: alpha, beta, beta', and beta''. When a (nuclear-encoded) sigma factor is associated with the core the holoenzyme is formed, which can initiate transcription.

The protein resides in the plastid. It is found in the chloroplast. The catalysed reaction is RNA(n) + a ribonucleoside 5'-triphosphate = RNA(n+1) + diphosphate. Functionally, DNA-dependent RNA polymerase catalyzes the transcription of DNA into RNA using the four ribonucleoside triphosphates as substrates. This chain is DNA-directed RNA polymerase subunit alpha, found in Acorus gramineus (Dwarf sweet flag).